A 514-amino-acid polypeptide reads, in one-letter code: Cobyric acid synthase (514 aa).

Residues 258–458 (ALMVGVVRLP…IHGIFDNDGL (201 aa)) enclose the GATase cobBQ-type domain. Cys-339 serves as the catalytic Nucleophile. The active site involves His-450.

It belongs to the CobB/CobQ family. CobQ subfamily.

The protein operates within cofactor biosynthesis; adenosylcobalamin biosynthesis. In terms of biological role, catalyzes amidations at positions B, D, E, and G on adenosylcobyrinic A,C-diamide. NH(2) groups are provided by glutamine, and one molecule of ATP is hydrogenolyzed for each amidation. This chain is Cobyric acid synthase, found in Syntrophobacter fumaroxidans (strain DSM 10017 / MPOB).